A 495-amino-acid polypeptide reads, in one-letter code: Lysine--tRNA ligase (495 aa).

Mg(2+) contacts are provided by glutamate 406 and glutamate 413.

Belongs to the class-II aminoacyl-tRNA synthetase family. In terms of assembly, homodimer. The cofactor is Mg(2+).

It is found in the cytoplasm. The catalysed reaction is tRNA(Lys) + L-lysine + ATP = L-lysyl-tRNA(Lys) + AMP + diphosphate. The sequence is that of Lysine--tRNA ligase from Leptospira interrogans serogroup Icterohaemorrhagiae serovar copenhageni (strain Fiocruz L1-130).